We begin with the raw amino-acid sequence, 430 residues long: Evolutionarily conserved signaling intermediate in Toll pathway, mitochondrial (430 aa).

A mitochondrion-targeting transit peptide spans 1–48 (MSWVQATLLARGLCRAWGGICRAALPGTSISQVPRQLPRGLHCSAAPH). The disordered stretch occupies residues 41–66 (LHCSAAPHSSEQSLVSSPPEPRQRPT). A compositionally biased stretch (polar residues) spans 47–56 (PHSSEQSLVS). Residue Lys-372 forms a Glycyl lysine isopeptide (Lys-Gly) (interchain with G-Cter in ubiquitin) linkage. Positions 400 to 430 (LHTSSAGLEEPPPPEDHEEDDSRQRQQQGQS) are disordered. Over residues 411-420 (PPPEDHEEDD) the composition is skewed to acidic residues.

This sequence belongs to the ECSIT family. In terms of assembly, interacts with MAP3K1, SMAD4 and TRAF6. Interacts with SMAD1 only after BMP4-treatment. Part of the mitochondrial complex I assembly/MCIA complex that comprises at least the core subunits TMEM126B, NDUFAF1, ECSIT and ACAD9 and complement subunits such as COA1 and TMEM186. Interacts with NDUFAF1. Interacts with ACAD9. Interacts with TRIM59. Interacts with TMEM70 and TMEM242. Interacts (when ubiquitinated) with NF-kappa-B subunits RELA and NFKB1. Interacts with RIGI, IFIT1 and MAVS; these interactions promote RLR-mediated type I IFN induction. Interacts with SQSTM1; this interaction inhibits TLR4 signaling via functional regulation of the TRAF6-ECSIT complex. Interacts with cereblon/CRBN; this interaction inhibits the ubiquitination of ECSIT. In terms of processing, ubiquitinated on Lys-372; leading to translocation in the nucleus together with RELA and NFKB1 and expression of NF-kappa-B-dependent genes.

The protein localises to the cytoplasm. Its subcellular location is the nucleus. The protein resides in the mitochondrion. Adapter protein that plays a role in different signaling pathways including TLRs and IL-1 pathways or innate antiviral induction signaling. Plays a role in the activation of NF-kappa-B by forming a signal complex with TRAF6 and TAK1/MAP3K7 to activate TAK1/MAP3K7 leading to activation of IKKs. Once ubiquitinated, interacts with the dissociated RELA and NFKB1 proteins and translocates to the nucleus where it induces NF-kappa-B-dependent gene expression. Plays a role in innate antiviral immune response by bridging the pattern recognition receptors RIGI and MDA5/IFIT1 to the MAVS complex at the mitochondrion. Promotes proteolytic activation of MAP3K1. Involved in the BMP signaling pathway. Required for normal embryonic development. Functionally, as part of the MCIA complex, involved in the assembly of the mitochondrial complex I. This chain is Evolutionarily conserved signaling intermediate in Toll pathway, mitochondrial, found in Macaca fascicularis (Crab-eating macaque).